We begin with the raw amino-acid sequence, 303 residues long: Secreted mono- and diacylglycerol lipase LIP4 (303 aa).

The signal sequence occupies residues 1–16 (MHFLAFLLCLIPLALC). A disulfide bridge connects residues Cys54 and Cys293. Residue Ser167 is the Nucleophile of the active site. Residue Asp224 is part of the active site.

It belongs to the AB hydrolase superfamily. Lipase family. Class 3 subfamily.

The protein resides in the secreted. The enzyme catalyses a monoacylglycerol + H2O = glycerol + a fatty acid + H(+). It catalyses the reaction a diacylglycerol + H2O = a monoacylglycerol + a fatty acid + H(+). In terms of biological role, secreted lipase involved in Dandruff and seborrheic dermatitis (D/SD) probably via lipase-mediated breakdown of sebaceous lipids and release of irritating free fatty acids. Shows activity against monoglyceride and diglyceride substrates. Due to an absence of fatty acid synthase genes in Malassezia species, secretory lipases are essential for the yeast to generate free fatty acids from degradation of sebum and assimilate them as lipid sources for growth. Plays an essential role at the pathogen-host interface during disease progression. The polypeptide is Secreted mono- and diacylglycerol lipase LIP4 (Malassezia restricta (strain ATCC 96810 / NBRC 103918 / CBS 7877) (Seborrheic dermatitis infection agent)).